A 174-amino-acid chain; its full sequence is UPF0336 protein MAP_3996c (174 aa).

Residues 11–131 (IGSHYRAPDY…VLAEIRSEVT (121 aa)) enclose the MaoC-like domain.

Belongs to the UPF0336 family.

The protein is UPF0336 protein MAP_3996c of Mycolicibacterium paratuberculosis (strain ATCC BAA-968 / K-10) (Mycobacterium paratuberculosis).